Reading from the N-terminus, the 1355-residue chain is DNA-directed RNA polymerase subunit beta' (1355 aa).

C219, C293, C300, and C303 together coordinate Zn(2+). Positions 1331 to 1355 are disordered; the sequence is AEVEVDDEVDDDYEDDDEDDDDYED.

The protein belongs to the RNA polymerase beta' chain family. RpoC2 subfamily. In terms of assembly, in cyanobacteria the RNAP catalytic core is composed of 2 alpha, 1 beta, 1 beta', 1 gamma and 1 omega subunit. When a sigma factor is associated with the core the holoenzyme is formed, which can initiate transcription. Zn(2+) serves as cofactor.

It catalyses the reaction RNA(n) + a ribonucleoside 5'-triphosphate = RNA(n+1) + diphosphate. Its function is as follows. DNA-dependent RNA polymerase catalyzes the transcription of DNA into RNA using the four ribonucleoside triphosphates as substrates. The polypeptide is DNA-directed RNA polymerase subunit beta' (Trichormus variabilis (strain ATCC 29413 / PCC 7937) (Anabaena variabilis)).